Here is a 210-residue protein sequence, read N- to C-terminus: N-(5'-phosphoribosyl)anthranilate isomerase (210 aa).

It belongs to the TrpF family.

The catalysed reaction is N-(5-phospho-beta-D-ribosyl)anthranilate = 1-(2-carboxyphenylamino)-1-deoxy-D-ribulose 5-phosphate. Its pathway is amino-acid biosynthesis; L-tryptophan biosynthesis; L-tryptophan from chorismate: step 3/5. This chain is N-(5'-phosphoribosyl)anthranilate isomerase, found in Staphylococcus aureus (strain Mu3 / ATCC 700698).